Consider the following 185-residue polypeptide: Elongation factor P (185 aa).

The protein belongs to the elongation factor P family.

It is found in the cytoplasm. Its pathway is protein biosynthesis; polypeptide chain elongation. Its function is as follows. Involved in peptide bond synthesis. Stimulates efficient translation and peptide-bond synthesis on native or reconstituted 70S ribosomes in vitro. Probably functions indirectly by altering the affinity of the ribosome for aminoacyl-tRNA, thus increasing their reactivity as acceptors for peptidyl transferase. In Endomicrobium trichonymphae, this protein is Elongation factor P.